The sequence spans 407 residues: uncharacterized protein (407 aa).

Positions Met1 to Ser27 are cleaved as a signal peptide.

This is an uncharacterized protein from Mycobacterium bovis (strain ATCC BAA-935 / AF2122/97).